A 424-amino-acid polypeptide reads, in one-letter code: ATP-citrate synthase alpha chain protein 3 (424 aa).

Positions 343, 345, and 376 each coordinate citrate.

Belongs to the succinate/malate CoA ligase beta subunit family. As to quaternary structure, heterooctamer of 4 alpha and 4 beta chains.

The protein localises to the cytoplasm. Its subcellular location is the cytosol. It carries out the reaction oxaloacetate + acetyl-CoA + ADP + phosphate = citrate + ATP + CoA. In terms of biological role, ATP citrate-lyase is the primary enzyme responsible for the synthesis of cytosolic acetyl-CoA, used for the elongation of fatty acids and biosynthesis of isoprenoids, flavonoids and malonated derivatives. May supply substrate to the cytosolic acetyl-CoA carboxylase, which generates the malonyl-CoA used for the synthesis of a multitude of compounds, including very long chain fatty acids and flavonoids. Required for normal growth and development and elongation of C18 fatty acids to C20 to C24 fatty acids in seeds. In contrast to all known animal ACL enzymes having a homomeric structure, plant ACLs are composed of alpha and beta chains. This is ATP-citrate synthase alpha chain protein 3 (ACLA-3) from Arabidopsis thaliana (Mouse-ear cress).